The primary structure comprises 343 residues: MDNQAERESEAGVGLQRDEDDAPLCEDVELQDGDLSPEEKIFLREFPRLKEDLKGNIDKLRALADDIDKTHKKFTKANMVATSTAVISGVMSLLGLALAPATGGGSLLLSTAGQGLATAAGVTSIVSGTLERSKNKEAQARAEDILPTYDQEDREDEEEKADYVTAAGKIIYNLRNTLKYAKKNVRAFWKLRANPRLANATKRLLTTGQVSSRSRVQVQKAFAGTTLAMTKNARVLGGVMSAFSLGYDLATLSKEWKHLKEGARTKFAEELRAKALELERKLTELTQLYKSLQQKVRSRARGVGKDLTGTCETEAYWKELREHVWMWLWLCVCLCVCVYVQFT.

Positions Met-1–Glu-10 are enriched in basic and acidic residues. The interval Met-1–Leu-24 is disordered.

It belongs to the apolipoprotein L family. As to expression, widely expressed; highly expressed in the uterus, fetal brain and spinal cord, also detected in heart, liver, lung, colon, spleen, thymus, prostate, placenta, adrenal gland, salivary and mammary gland.

The protein resides in the cytoplasm. In terms of biological role, may affect the movement of lipids in the cytoplasm or allow the binding of lipids to organelles. This chain is Apolipoprotein L6 (APOL6), found in Homo sapiens (Human).